Reading from the N-terminus, the 119-residue chain is Large ribosomal subunit protein uL18 (119 aa).

It belongs to the universal ribosomal protein uL18 family. As to quaternary structure, part of the 50S ribosomal subunit; part of the 5S rRNA/L5/L18/L25 subcomplex. Contacts the 5S and 23S rRNAs.

Its function is as follows. This is one of the proteins that bind and probably mediate the attachment of the 5S RNA into the large ribosomal subunit, where it forms part of the central protuberance. The sequence is that of Large ribosomal subunit protein uL18 from Clostridium botulinum (strain 657 / Type Ba4).